A 266-amino-acid polypeptide reads, in one-letter code: Type II pantothenate kinase (266 aa).

Position 6-13 (aspartate 6–lysine 13) interacts with ATP. The active-site Proton acceptor is glutamate 70. Residues threonine 99, glycine 121 to glutamine 125, tyrosine 137, and serine 225 each bind ATP.

The protein belongs to the type II pantothenate kinase family. Homodimer.

Its subcellular location is the cytoplasm. It catalyses the reaction (R)-pantothenate + ATP = (R)-4'-phosphopantothenate + ADP + H(+). It participates in cofactor biosynthesis; coenzyme A biosynthesis; CoA from (R)-pantothenate: step 1/5. Its function is as follows. Catalyzes the phosphorylation of pantothenate (Pan), the first step in CoA biosynthesis. The chain is Type II pantothenate kinase from Staphylococcus haemolyticus (strain JCSC1435).